The following is a 119-amino-acid chain: Large ribosomal subunit protein bL20 (119 aa).

Belongs to the bacterial ribosomal protein bL20 family.

Binds directly to 23S ribosomal RNA and is necessary for the in vitro assembly process of the 50S ribosomal subunit. It is not involved in the protein synthesizing functions of that subunit. The sequence is that of Large ribosomal subunit protein bL20 from Shewanella frigidimarina (strain NCIMB 400).